Reading from the N-terminus, the 127-residue chain is Cystatin cpi-1 (127 aa).

Residues 1-19 form the signal peptide; the sequence is MFFPIVWLSVLLIISKSFA. The short motif at 68–72 is the Secondary area of contact element; that stretch reads QVVAG. C86 and C98 form a disulfide bridge.

The protein belongs to the cystatin family.

Its function is as follows. Cysteine protease inhibitor which inhibits members of the peptidase C1 family. Does not inhibit asparaginyl endopeptidase. This Brugia malayi (Filarial nematode worm) protein is Cystatin cpi-1.